Here is a 743-residue protein sequence, read N- to C-terminus: 1,4-alpha-glucan branching enzyme GlgB (743 aa).

The active-site Nucleophile is the Asp-423. Glu-476 serves as the catalytic Proton donor.

The protein belongs to the glycosyl hydrolase 13 family. GlgB subfamily. As to quaternary structure, monomer.

It carries out the reaction Transfers a segment of a (1-&gt;4)-alpha-D-glucan chain to a primary hydroxy group in a similar glucan chain.. Its pathway is glycan biosynthesis; glycogen biosynthesis. Functionally, catalyzes the formation of the alpha-1,6-glucosidic linkages in glycogen by scission of a 1,4-alpha-linked oligosaccharide from growing alpha-1,4-glucan chains and the subsequent attachment of the oligosaccharide to the alpha-1,6 position. The protein is 1,4-alpha-glucan branching enzyme GlgB of Pseudomonas fluorescens (strain ATCC BAA-477 / NRRL B-23932 / Pf-5).